A 312-amino-acid polypeptide reads, in one-letter code: Olfactory receptor 51I2 (312 aa).

Over 1-25 the chain is Extracellular; the sequence is MGLFNVTHPAFFLLTGIPGLESSHS. Asn5 carries N-linked (GlcNAc...) asparagine glycosylation. The chain crosses the membrane as a helical span at residues 26–46; it reads WLSGPLCVMYAVALGGNTVIL. Topologically, residues 47–54 are cytoplasmic; sequence QAVRVEPS. A helical transmembrane segment spans residues 55–75; it reads LHEPMYYFLSMLSFSDVAISM. Topologically, residues 76–99 are extracellular; it reads ATLPTVLRTFCLNARNITFDACLI. Cys97 and Cys189 form a disulfide bridge. Residues 100–120 traverse the membrane as a helical segment; sequence QMFLIHFFSMMESGILLAMSF. Topologically, residues 121 to 139 are cytoplasmic; the sequence is DRYVAICDPLRYATVLTTE. Residues 140–160 form a helical membrane-spanning segment; it reads VIAAMGLGAAARSFITLFPLP. Residues 161 to 196 lie on the Extracellular side of the membrane; it reads FLIKRLPICRSNVLSHSYCLHPDMMRLACADISINS. A helical transmembrane segment spans residues 197–217; sequence IYGLFVLVSTFGMDLFFIFLS. The Cytoplasmic portion of the chain corresponds to 218–237; the sequence is YVLILRSVMATASREERLKA. The helical transmembrane segment at 238–258 threads the bilayer; sequence LNTCVSHILAVLAFYVPMIGV. Topologically, residues 259–273 are extracellular; the sequence is STVHRFGKHVPCYIH. Residues 274 to 294 form a helical membrane-spanning segment; that stretch reads VLMSNVYLFVPPVLNPLIYSA. The Cytoplasmic portion of the chain corresponds to 295-312; the sequence is KTKEIRRAIFRMFHHIKI.

This sequence belongs to the G-protein coupled receptor 1 family.

The protein resides in the cell membrane. In terms of biological role, odorant receptor. This chain is Olfactory receptor 51I2 (OR51I2), found in Homo sapiens (Human).